Consider the following 267-residue polypeptide: MDFRAGLENVLQQEVTVIHGEETRKLCIANNKYLNGKDADTFRNLAVLLDHLGERSAKAQKLPKPVTSFIKFRNSDQSIFLLSDIPVKKFVILIYMFFRVLGFLKVGRKRLFVHDSKGVCVECIPLCILDFYIHESHQRKGYGKKLFDFMLKTENIQPSYLAIDLPSMKMIQFLHKHYHLINPIYSPNNFVVYSEFFNNLNNSNYSIVQSKLTTTNCFLKSNSSRIHQNKHNHSIVSNNNNNNNNNIIIIIIIQNITHHNNQLTIEQ.

In terms of domain architecture, N-acetyltransferase spans 1–197 (MDFRAGLENV…NNFVVYSEFF (197 aa)). Residues 131 to 144 (FYIHESHQRKGYGK) and 167 to 176 (SMKMIQFLHK) each bind acetyl-CoA.

Belongs to the acetyltransferase ATAT1 family.

The catalysed reaction is L-lysyl-[alpha-tubulin] + acetyl-CoA = N(6)-acetyl-L-lysyl-[alpha-tubulin] + CoA + H(+). Its function is as follows. Specifically acetylates 'Lys-40' in alpha-tubulin on the lumenal side of microtubules. Promotes microtubule destabilization and accelerates microtubule dynamics; this activity may be independent of acetylation activity. Acetylates alpha-tubulin with a slow enzymatic rate, due to a catalytic site that is not optimized for acetyl transfer. Enters the microtubule through each end and diffuses quickly throughout the lumen of microtubules. Acetylates only long/old microtubules because of its slow acetylation rate since it does not have time to act on dynamically unstable microtubules before the enzyme is released. This Schistosoma japonicum (Blood fluke) protein is Alpha-tubulin N-acetyltransferase.